Consider the following 109-residue polypeptide: Phosphoribosyl-ATP pyrophosphatase (109 aa).

This sequence belongs to the PRA-PH family.

It is found in the cytoplasm. The enzyme catalyses 1-(5-phospho-beta-D-ribosyl)-ATP + H2O = 1-(5-phospho-beta-D-ribosyl)-5'-AMP + diphosphate + H(+). Its pathway is amino-acid biosynthesis; L-histidine biosynthesis; L-histidine from 5-phospho-alpha-D-ribose 1-diphosphate: step 2/9. The chain is Phosphoribosyl-ATP pyrophosphatase from Sphingopyxis alaskensis (strain DSM 13593 / LMG 18877 / RB2256) (Sphingomonas alaskensis).